A 236-amino-acid polypeptide reads, in one-letter code: Sugar fermentation stimulation protein homolog (236 aa).

It belongs to the SfsA family.

In Gloeobacter violaceus (strain ATCC 29082 / PCC 7421), this protein is Sugar fermentation stimulation protein homolog.